The following is a 411-amino-acid chain: Secretion apparatus protein BsaZ (411 aa).

4 helical membrane passes run 28 to 48, 80 to 100, 137 to 157, and 175 to 195; these read IVAL…VDLT, IAAP…LVQS, ALLY…LYHA, and IVLT…VLIL. The interval 341 to 411 is disordered; the sequence is AANRGGPPPE…APARTGDQNA (71 aa). Residues 370–404 show a composition bias toward low complexity; it reads DACADNAFPDDAPPGAAAPNAGSPDGPAPDGGAPA.

This sequence belongs to the type III secretion exporter family.

The protein resides in the cell membrane. Part of the bsa type III secretion system, is involved in the intracellular replication of invading bacteria inside the host cell. Probably necessary for the lysis of the vacuole membrane and escape into the host cell cytoplasm. The chain is Secretion apparatus protein BsaZ (bsaZ) from Burkholderia pseudomallei (strain 1026b).